The following is a 364-amino-acid chain: DNA replication and repair protein RecF (364 aa).

30–37 (GANGSGKT) provides a ligand contact to ATP.

This sequence belongs to the RecF family.

It localises to the cytoplasm. In terms of biological role, the RecF protein is involved in DNA metabolism; it is required for DNA replication and normal SOS inducibility. RecF binds preferentially to single-stranded, linear DNA. It also seems to bind ATP. In Sodalis glossinidius, this protein is DNA replication and repair protein RecF.